The chain runs to 215 residues: MLQVYLVRHGETQWNAERRIQGQSDSPLTAKGEQQARQVAERARTLGITHIIASDLGRTQQTARIIADACGCDIILDPRLRELDMGVLEKRHVDSLTDEEEGWRRTLVNGTEDGRIPDGESMQELSVRVQAALADCLKLPEGSRPLLVSHGIALGCLVSTILGLPAYAERRLRLRNCSISRIDYQESPWLASGWVVEMAGDISHLDAPALDELQR.

Substrate is bound by residues 8 to 15, 21 to 22, R58, 82 to 85, 104 to 105, and 151 to 152; these read RHGETQWN, QG, ELDM, RR, and GI. H9 serves as the catalytic Tele-phosphohistidine intermediate. The active-site Proton donor/acceptor is E82.

It belongs to the phosphoglycerate mutase family. GpmB subfamily.

It catalyses the reaction (2R)-2-phosphoglycerate = (2R)-3-phosphoglycerate. It functions in the pathway carbohydrate degradation; glycolysis; pyruvate from D-glyceraldehyde 3-phosphate: step 3/5. This Enterobacter sp. (strain 638) protein is Probable phosphoglycerate mutase GpmB.